Here is a 994-residue protein sequence, read N- to C-terminus: MTRKENEESESLSSSSSPIDNSNNNNNNNNHSIFNPIGHIQNAFNNIDLNPLNVDFKGHTDKVVNFFQHGTGDLNDRMQGVVSKLRSNEYRKKMHSVLTKIKDTKEYKSTSNTDYDVIFESVDMYSNLQQDPTMDKDEIDVVTDLSSYKKKFTHWLGKERISTLLFIPTLGILIALMGILCDFLLMELGTLRDFVTSRHNSHVIPTDGTTPTPNSSIADKYDLVEGIVFVGYSVFFALISVCCISFISPYAVGSGIPEMKSIMSGINLSRVLGFKTLVSKIVGMVCASAAGLTIGRTGPFMHASAIISQMLMNLKVFGAIKKNQIVRYQMLICALTSGVVANFGAPIGGLLFAIEVTATTAVMGNLWKGFLCATTTAIIFFLSRSTFSKGNFHSVYEFEFVPKEYGVADLITFVGIGIITGLIGAFFVFIYEKLVRFRLRYPILKQSRIILVLVVSLFSAIITYSAGPLCRVSLPTAMKQFLGQNEPKPFLFEQDQTPYYKYLNLLVFIVVKLILTAFNIVLPIPGGAITPFIVTGAALGRLFGEILKDHFDSQAIEPAGFAAIASAGLVSGTIRNISPSIFVLELTGQLSLLVPILICSITSTAVGNFFNRPLFDTALKIQGLPFLSNYRSSKVYTMTAKQVMKKNINYLSMTSTVIEMKNFLDTFKYTFIPIVDSKENMLLVGIVERSSMIYMLDIHIENIEQKIDEFKSKYFVNNNNNNNNNNNNNNNNNNNNNNNNNNNNNNNNNNNNNNNNNNNNNSNNSENLEIENTGAILNTNSNNNNSDEEDYDRKDNDKISLIKPNQDESSSNSNGGSSSDFEEILNTQNTNINKNDNEDLIKEIEDENSSLGEKPIIEHDDEDDDEEEGDGIPLVSMKDQQPVLRNRHTTTTTTTTTTTPITENIYVNDAFEISINDLKNGGQSVWGKHILGDIIHSGETALLMDLAPSQVPDLTPLNKVFHLFTMLGLGFTYVTSLGKLVGVITKNSLMEQDL.

Residues 1-33 (MTRKENEESESLSSSSSPIDNSNNNNNNNNHSI) are disordered. The Cytoplasmic segment spans residues 1 to 163 (MTRKENEESE…HWLGKERIST (163 aa)). Positions 11-32 (SLSSSSSPIDNSNNNNNNNNHS) are enriched in low complexity. Transmembrane regions (helical) follow at residues 164 to 184 (LLFI…CDFL), 227 to 247 (IVFV…ISFI), 271 to 291 (VLGF…SAAG), 300 to 320 (FMHA…FGAI), 334 to 354 (ALTS…LFAI), 362 to 382 (VMGN…IFFL), 410 to 430 (LITF…FVFI), 449 to 469 (IILV…AGPL), 505 to 525 (LLVF…LPIP), 527 to 547 (GAIT…GEIL), and 554 to 574 (QAIE…SGTI). Residues 644–705 (MKKNINYLSM…LDIHIENIEQ (62 aa)) enclose the CBS 1 domain. Disordered stretches follow at residues 715 to 767 (FVNN…NSEN), 802 to 822 (IKPN…SDFE), and 846 to 872 (DENS…GDGI). 2 stretches are compositionally biased toward low complexity: residues 717 to 764 (NNNN…NSNN) and 809 to 822 (SSSN…SDFE). Acidic residues predominate over residues 859-870 (HDDEDDDEEEGD). In terms of domain architecture, CBS 2 spans 944–994 (MDLAPSQVPDLTPLNKVFHLFTMLGLGFTYVTSLGKLVGVITKNSLMEQDL).

Belongs to the chloride channel (TC 2.A.49) family.

The protein localises to the membrane. Functionally, voltage-gated chloride channel. Chloride channels may have several functions including the regulation of cell volume, membrane potential stabilization and signal transduction. This chain is Chloride channel protein E (clcE), found in Dictyostelium discoideum (Social amoeba).